A 259-amino-acid chain; its full sequence is Probable iron export permease protein FetB (259 aa).

Residues 1 to 5 are Periplasmic-facing; that stretch reads MNSHN. The helical transmembrane segment at 6-26 threads the bilayer; it reads ITNESLALALMLVVVAILISH. The Cytoplasmic segment spans residues 27-35; the sequence is KEKLALEKD. The next 2 helical transmembrane spans lie at 36 to 56 and 57 to 77; these read ILWS…VLKY and IFSV…CFNA. Over 78–91 the chain is Cytoplasmic; sequence AWNAQKRSKYIAKA. A helical transmembrane segment spans residues 92 to 112; the sequence is FISSFIAITVGAGITLAVLIL. Residues 113–117 are Periplasmic-facing; sequence SGSIE. A helical transmembrane segment spans residues 118 to 138; sequence FIPMQVIPIAGMIAGNAMVAV. The Cytoplasmic portion of the chain corresponds to 139-191; sequence GLCYNNLGQRVISEQQQIQEKLSLGATPKQASAILIRDSIRAALIPTVDSAKT. Residues 192–212 traverse the membrane as a helical segment; sequence VGLVSLPGMMSGLIFAGIDPV. Over 213–218 the chain is Periplasmic; the sequence is KAIKYQ. Residues 219-239 traverse the membrane as a helical segment; it reads IMVTFMLLSTASLSTIIACYL. The Cytoplasmic segment spans residues 240–259; the sequence is TYRKFYNSRHQLVVTQLKKK.

Belongs to the UPF0014 family. As to quaternary structure, the complex is composed of two ATP-binding proteins (FetA) and two transmembrane proteins (FetB).

Its subcellular location is the cell inner membrane. Its function is as follows. Part of the ABC transporter complex FetAB, which is probably involved in iron export and enhances resistance to H(2)O(2)-mediated oxidative stress. Probably responsible for the translocation of the substrate across the membrane. The polypeptide is Probable iron export permease protein FetB (fetB) (Escherichia coli (strain K12)).